A 294-amino-acid polypeptide reads, in one-letter code: Syntaxin-19 (294 aa).

Residues Leu209–Ala271 enclose the t-SNARE coiled-coil homology domain.

It belongs to the syntaxin family. Interacts with EGFR.

The protein localises to the cell membrane. It localises to the cytoplasm. In terms of biological role, plays a role in endosomal trafficking of the epidermal growth factor receptor (EGFR). This Homo sapiens (Human) protein is Syntaxin-19 (STX19).